A 115-amino-acid chain; its full sequence is Large ribosomal subunit protein bL19 (115 aa).

This sequence belongs to the bacterial ribosomal protein bL19 family.

Functionally, this protein is located at the 30S-50S ribosomal subunit interface and may play a role in the structure and function of the aminoacyl-tRNA binding site. The protein is Large ribosomal subunit protein bL19 of Tropheryma whipplei (strain TW08/27) (Whipple's bacillus).